Consider the following 366-residue polypeptide: 3-isopropylmalate dehydrogenase (366 aa).

Position 78-91 (78-91 (GPKWEDLPSHLQPE)) interacts with NAD(+). R99, R109, R138, and D227 together coordinate substrate. D227, D251, and D255 together coordinate Mg(2+). Residue 285 to 297 (GSAPDIKGKNIAN) participates in NAD(+) binding.

The protein belongs to the isocitrate and isopropylmalate dehydrogenases family. LeuB type 1 subfamily. As to quaternary structure, homodimer. Requires Mg(2+) as cofactor. Mn(2+) serves as cofactor.

The protein localises to the cytoplasm. The catalysed reaction is (2R,3S)-3-isopropylmalate + NAD(+) = 4-methyl-2-oxopentanoate + CO2 + NADH. It functions in the pathway amino-acid biosynthesis; L-leucine biosynthesis; L-leucine from 3-methyl-2-oxobutanoate: step 3/4. Catalyzes the oxidation of 3-carboxy-2-hydroxy-4-methylpentanoate (3-isopropylmalate) to 3-carboxy-4-methyl-2-oxopentanoate. The product decarboxylates to 4-methyl-2 oxopentanoate. This chain is 3-isopropylmalate dehydrogenase, found in Buchnera aphidicola subsp. Baizongia pistaciae (strain Bp).